Here is a 309-residue protein sequence, read N- to C-terminus: L-lactate dehydrogenase (309 aa).

NAD(+) contacts are provided by residues Val12, Asp33, Arg38, Tyr63, and 77-78 (GA). Substrate is bound by residues Gln80, Arg86, and 118-121 (NPVD). Residues 116 to 118 (ATN) and Ser141 each bind NAD(+). 146-149 (DSAR) contributes to the substrate binding site. Arg151 and His166 together coordinate beta-D-fructose 1,6-bisphosphate. His173 (proton acceptor) is an active-site residue. Position 219 is a phosphotyrosine (Tyr219). Thr228 serves as a coordination point for substrate.

Belongs to the LDH/MDH superfamily. LDH family. Homotetramer.

It localises to the cytoplasm. The enzyme catalyses (S)-lactate + NAD(+) = pyruvate + NADH + H(+). The protein operates within fermentation; pyruvate fermentation to lactate; (S)-lactate from pyruvate: step 1/1. Allosterically activated by fructose 1,6-bisphosphate (FBP). Its function is as follows. Catalyzes the conversion of lactate to pyruvate. In Nitratidesulfovibrio vulgaris (strain ATCC 29579 / DSM 644 / CCUG 34227 / NCIMB 8303 / VKM B-1760 / Hildenborough) (Desulfovibrio vulgaris), this protein is L-lactate dehydrogenase.